The chain runs to 343 residues: L-threonine 3-dehydrogenase (343 aa).

Cys-40 provides a ligand contact to Zn(2+). Active-site charge relay system residues include Thr-42 and His-45. The Zn(2+) site is built by His-65, Glu-66, Cys-95, Cys-98, Cys-101, and Cys-109. NAD(+) contacts are provided by residues Ile-177, Asp-197, Arg-202, 264–266 (LGI), and 288–289 (IY).

This sequence belongs to the zinc-containing alcohol dehydrogenase family. As to quaternary structure, homotetramer. Requires Zn(2+) as cofactor.

It is found in the cytoplasm. The catalysed reaction is L-threonine + NAD(+) = (2S)-2-amino-3-oxobutanoate + NADH + H(+). The protein operates within amino-acid degradation; L-threonine degradation via oxydo-reductase pathway; glycine from L-threonine: step 1/2. Functionally, catalyzes the NAD(+)-dependent oxidation of L-threonine to 2-amino-3-ketobutyrate. The sequence is that of L-threonine 3-dehydrogenase from Vibrio parahaemolyticus serotype O3:K6 (strain RIMD 2210633).